Reading from the N-terminus, the 369-residue chain is 3-dehydroquinate synthase (369 aa).

Residues 110-114 (GVIGD), 134-135 (TT), Lys147, Lys156, and 174-177 (TLKT) each bind NAD(+). Zn(2+) contacts are provided by Glu189, His254, and His271.

Belongs to the sugar phosphate cyclases superfamily. Dehydroquinate synthase family. The cofactor is Co(2+). Requires Zn(2+) as cofactor. NAD(+) is required as a cofactor.

Its subcellular location is the cytoplasm. The catalysed reaction is 7-phospho-2-dehydro-3-deoxy-D-arabino-heptonate = 3-dehydroquinate + phosphate. Its pathway is metabolic intermediate biosynthesis; chorismate biosynthesis; chorismate from D-erythrose 4-phosphate and phosphoenolpyruvate: step 2/7. Catalyzes the conversion of 3-deoxy-D-arabino-heptulosonate 7-phosphate (DAHP) to dehydroquinate (DHQ). The chain is 3-dehydroquinate synthase from Cyanothece sp. (strain PCC 7425 / ATCC 29141).